The following is a 330-amino-acid chain: Bifunctional pinoresinol-lariciresinol reductase 2 (330 aa).

NADP(+)-binding positions include 28-34, R53, and K62; that span reads GGTGYLG. The active-site Proton acceptor is the K156. NADP(+) is bound at residue R160. H288 is a substrate binding site.

Belongs to the NmrA-type oxidoreductase family. Isoflavone reductase subfamily. Dimer. As to expression, expressed in leaves, stems, leaves and seeds.

It catalyses the reaction (+)-lariciresinol + NADP(+) = (+)-pinoresinol + NADPH + H(+). It carries out the reaction (-)-secoisolariciresinol + NADP(+) = (+)-lariciresinol + NADPH + H(+). Functionally, reductase involved in lignan biosynthesis. Catalyzes the enantioselective conversion of (+)-pinoresinol into (+)-lariciresinol and of (+)-lariciresinol into (-)-secoisolariciresinol. Abstracts the 4R-hydride from the NADPH cofactor during catalysis. The protein is Bifunctional pinoresinol-lariciresinol reductase 2 (PLR_Lu2) of Linum usitatissimum (Flax).